A 354-amino-acid chain; its full sequence is UPF0324 membrane protein BL1094 (354 aa).

10 helical membrane-spanning segments follow: residues 12–33, 43–65, 86–108, 112–129, 138–160, 175–197, 239–256, 271–293, 300–321, and 331–353; these read IATV…FASW, FGAL…SAYV, LLRL…TQGI, PIAA…YAIA, LAIL…LAGS, VTMA…IALG, LSRV…AIWW, VAFP…VPFV, LVDF…NVNF, and PMLA…AMLF.

Belongs to the UPF0324 family.

The protein localises to the cell membrane. This Bifidobacterium longum (strain NCC 2705) protein is UPF0324 membrane protein BL1094.